Consider the following 123-residue polypeptide: Small ribosomal subunit protein bS16 (123 aa).

Residues Pro-86–Glu-123 are disordered. Over residues Lys-93–Gln-102 the composition is skewed to low complexity. Residues Arg-104–Ala-113 are compositionally biased toward basic and acidic residues. Positions Ala-114–Glu-123 are enriched in low complexity.

This sequence belongs to the bacterial ribosomal protein bS16 family.

The protein is Small ribosomal subunit protein bS16 of Paramagnetospirillum magneticum (strain ATCC 700264 / AMB-1) (Magnetospirillum magneticum).